Reading from the N-terminus, the 448-residue chain is Ribosomal protein uS12 methylthiotransferase RimO (448 aa).

Positions 16 to 126 constitute an MTTase N-terminal domain; the sequence is PKISFVSLGC…VVAAVHEAVP (111 aa). Residues Cys-25, Cys-61, Cys-90, Cys-157, Cys-161, and Cys-164 each coordinate [4Fe-4S] cluster. Residues 143-380 form the Radical SAM core domain; the sequence is LTPRHYAYLK…METQNGIALR (238 aa). Residues 383–448 enclose the TRAM domain; sequence RAKVGKRLPV…EAYDLYGSVA (66 aa).

It belongs to the methylthiotransferase family. RimO subfamily. [4Fe-4S] cluster is required as a cofactor.

Its subcellular location is the cytoplasm. It catalyses the reaction L-aspartate(89)-[ribosomal protein uS12]-hydrogen + (sulfur carrier)-SH + AH2 + 2 S-adenosyl-L-methionine = 3-methylsulfanyl-L-aspartate(89)-[ribosomal protein uS12]-hydrogen + (sulfur carrier)-H + 5'-deoxyadenosine + L-methionine + A + S-adenosyl-L-homocysteine + 2 H(+). Functionally, catalyzes the methylthiolation of an aspartic acid residue of ribosomal protein uS12. In Methylobacterium radiotolerans (strain ATCC 27329 / DSM 1819 / JCM 2831 / NBRC 15690 / NCIMB 10815 / 0-1), this protein is Ribosomal protein uS12 methylthiotransferase RimO.